Consider the following 358-residue polypeptide: Alanine racemase (358 aa).

Lys35 serves as the catalytic Proton acceptor; specific for D-alanine. Lys35 carries the N6-(pyridoxal phosphate)lysine modification. Arg131 contributes to the substrate binding site. Tyr253 acts as the Proton acceptor; specific for L-alanine in catalysis. Met301 contributes to the substrate binding site.

The protein belongs to the alanine racemase family. Requires pyridoxal 5'-phosphate as cofactor.

It carries out the reaction L-alanine = D-alanine. Its pathway is amino-acid biosynthesis; D-alanine biosynthesis; D-alanine from L-alanine: step 1/1. Its function is as follows. Catalyzes the interconversion of L-alanine and D-alanine. May also act on other amino acids. In Alteromonas mediterranea (strain DSM 17117 / CIP 110805 / LMG 28347 / Deep ecotype), this protein is Alanine racemase (alr).